A 475-amino-acid polypeptide reads, in one-letter code: tRNA-2-methylthio-N(6)-dimethylallyladenosine synthase (475 aa).

In terms of domain architecture, MTTase N-terminal spans 2–119 (AKLHITTWGC…LPEMINKIRG (118 aa)). Residues Cys-11, Cys-48, Cys-82, Cys-156, Cys-160, and Cys-163 each contribute to the [4Fe-4S] cluster site. The Radical SAM core domain occupies 142 to 374 (RAEGPTAFVS…QQRINHQAMQ (233 aa)). A TRAM domain is found at 377 to 440 (RAMLGTEQRV…TNSLRGDVVR (64 aa)).

This sequence belongs to the methylthiotransferase family. MiaB subfamily. Monomer. [4Fe-4S] cluster serves as cofactor.

It is found in the cytoplasm. The enzyme catalyses N(6)-dimethylallyladenosine(37) in tRNA + (sulfur carrier)-SH + AH2 + 2 S-adenosyl-L-methionine = 2-methylsulfanyl-N(6)-dimethylallyladenosine(37) in tRNA + (sulfur carrier)-H + 5'-deoxyadenosine + L-methionine + A + S-adenosyl-L-homocysteine + 2 H(+). Its function is as follows. Catalyzes the methylthiolation of N6-(dimethylallyl)adenosine (i(6)A), leading to the formation of 2-methylthio-N6-(dimethylallyl)adenosine (ms(2)i(6)A) at position 37 in tRNAs that read codons beginning with uridine. This Actinobacillus pleuropneumoniae serotype 5b (strain L20) protein is tRNA-2-methylthio-N(6)-dimethylallyladenosine synthase.